The sequence spans 533 residues: Cytochrome P450 monooxygenase calL (533 aa).

A helical transmembrane segment spans residues 8-28 (TQLALLVWGIAVCVTLAIVVP). Asn33 is a glycosylation site (N-linked (GlcNAc...) asparagine). The disordered stretch occupies residues 123–148 (GKFKQDQSGRSKNPVPGHDVKPGQPR). An N-linked (GlcNAc...) asparagine glycan is attached at Asn388. A heme-binding site is contributed by Cys467.

The protein belongs to the cytochrome P450 family. Heme serves as cofactor.

It localises to the membrane. It participates in secondary metabolite biosynthesis. Its function is as follows. Cytochrome P450 monooxygenase; part of the gene cluster that mediates the biosynthesis of calbistrin A and related compounds. Calbistrin A is a secondary metabolite with an interesting structure that was recently found to have bioactivity against leukemia cells. It consists of two polyketides linked by an ester bond: a bicyclic decalin containing polyketide and a linear 12 carbon dioic acid structure. The polyketide synthase calA is probably responsible for forming the decalin moiety. Because calA lacks a designated enoylreductase (ER) domain, the required activity is provided by the trans-enoyl reductase calK. Following release from the PKS, calF then probably catalyzes the oxidation and the subsequent Diels Alder cycloisomerization that lead to the formation of the decalin moiety. The decalin polyketide backbone includes two C-methyl groups, at C7 and C11 in backbone, of which the C7 position is probably methylated by the methyltransferase domain of calA. A candidate for adding the methyl group at C11, if not done by CalA, is the cluster methyltransferase calH. Several additional tailoring enzymes within the cluster could be involved in the modification of the decalin polyketide product. Those include the 3 cytochrome P450 monooxygenases CalE, CalG and CalL, of which one might be responsible for the introduction of the extra hydroxyl group attached to the backbone of the decalin moiety, at position C9 in the backbone, that allows for attachment of the linear moiety. One tailoring enzyme activity that is expected to be involved in biosynthesis of calbistrin is an acyltransferase for connecting the two polyketide synthase products, and which could be performed by the cluster acyltransferase calJ. The enzyme responsible for the biosynthesis of the linear moiety, probably a second PKS, has not been identified yet. The chain is Cytochrome P450 monooxygenase calL from Penicillium decumbens.